Consider the following 42-residue polypeptide: uncharacterized protein (42 aa).

A helical membrane pass occupies residues 15–35; that stretch reads INVCLSFFFLFYFIFVLFFAA.

It is found in the membrane. This is an uncharacterized protein from Dictyostelium discoideum (Social amoeba).